Here is a 357-residue protein sequence, read N- to C-terminus: Phosphate acyltransferase (357 aa).

This sequence belongs to the PlsX family. Homodimer. Probably interacts with PlsY.

Its subcellular location is the cytoplasm. It carries out the reaction a fatty acyl-[ACP] + phosphate = an acyl phosphate + holo-[ACP]. It participates in lipid metabolism; phospholipid metabolism. In terms of biological role, catalyzes the reversible formation of acyl-phosphate (acyl-PO(4)) from acyl-[acyl-carrier-protein] (acyl-ACP). This enzyme utilizes acyl-ACP as fatty acyl donor, but not acyl-CoA. This Herminiimonas arsenicoxydans protein is Phosphate acyltransferase.